Here is a 1336-residue protein sequence, read N- to C-terminus: Coiled-coil and C2 domain-containing protein 2A (1336 aa).

Disordered regions lie at residues M1 to V29 and V70 to I97. The span at K8–R23 shows a compositional bias: basic residues. The segment covering V70–T89 has biased composition (acidic residues). A coiled-coil region spans residues L136–Q156. Positions P755–I915 constitute a C2 domain.

In terms of assembly, probable component of the tectonic-like complex (also named MKS complex), composed of B9d1, B9d2, Cc2d2a, Mks1 and tctn. In terms of tissue distribution, expressed in the antennae of chordotonal neurons and male germ cells (at protein level).

Its subcellular location is the cytoplasm. It localises to the cytoskeleton. The protein localises to the cilium basal body. It is found in the microtubule organizing center. The protein resides in the centrosome. Its subcellular location is the centriole. In terms of biological role, probable component of the tectonic-like complex (also named MKS complex), a complex localized at the transition zone of primary cilia. Required for ciliary structure and function. This Drosophila melanogaster (Fruit fly) protein is Coiled-coil and C2 domain-containing protein 2A.